The chain runs to 195 residues: Probable GTP-binding protein EngB (195 aa).

The EngB-type G domain maps to 24–195 (DWPEIALAGR…EAWTAILKYL (172 aa)). GTP is bound by residues 32-39 (GRSNVGKS), 59-63 (GKTQL), 77-80 (DVPG), 144-147 (TKAD), and 176-178 (FSS). Mg(2+)-binding residues include Ser-39 and Thr-61.

Belongs to the TRAFAC class TrmE-Era-EngA-EngB-Septin-like GTPase superfamily. EngB GTPase family. The cofactor is Mg(2+).

In terms of biological role, necessary for normal cell division and for the maintenance of normal septation. The polypeptide is Probable GTP-binding protein EngB (Lactococcus lactis subsp. cremoris (strain MG1363)).